We begin with the raw amino-acid sequence, 353 residues long: Putative permease PerM (353 aa).

The next 7 membrane-spanning stretches (helical) occupy residues 19–39 (IALL…SGLL), 72–92 (IVLV…LPIA), 156–176 (LVGL…VFFL), 217–237 (VLEM…FGLN), 240–260 (LLLA…AFVV), 281–301 (CFAV…PVLF), and 310–330 (LVII…GVFF).

It belongs to the autoinducer-2 exporter (AI-2E) (TC 2.A.86) family.

It is found in the cell membrane. In Escherichia coli O157:H7, this protein is Putative permease PerM (perM).